The sequence spans 317 residues: UDP-3-O-acylglucosamine N-acyltransferase (317 aa).

Catalysis depends on His-229, which acts as the Proton acceptor.

Belongs to the transferase hexapeptide repeat family. LpxD subfamily. As to quaternary structure, homotrimer.

The catalysed reaction is a UDP-3-O-[(3R)-3-hydroxyacyl]-alpha-D-glucosamine + a (3R)-hydroxyacyl-[ACP] = a UDP-2-N,3-O-bis[(3R)-3-hydroxyacyl]-alpha-D-glucosamine + holo-[ACP] + H(+). The protein operates within bacterial outer membrane biogenesis; LPS lipid A biosynthesis. In terms of biological role, catalyzes the N-acylation of UDP-3-O-acylglucosamine using 3-hydroxyacyl-ACP as the acyl donor. Is involved in the biosynthesis of lipid A, a phosphorylated glycolipid that anchors the lipopolysaccharide to the outer membrane of the cell. The sequence is that of UDP-3-O-acylglucosamine N-acyltransferase from Campylobacter curvus (strain 525.92).